Here is a 155-residue protein sequence, read N- to C-terminus: 2-C-methyl-D-erythritol 2,4-cyclodiphosphate synthase (155 aa).

2 residues coordinate a divalent metal cation: aspartate 8 and histidine 10. 4-CDP-2-C-methyl-D-erythritol 2-phosphate contacts are provided by residues 8–10 and 34–35; these read DVH and HS. Histidine 42 lines the a divalent metal cation pocket. 4-CDP-2-C-methyl-D-erythritol 2-phosphate contacts are provided by residues 56–58, 61–65, 100–106, 132–135, phenylalanine 139, and lysine 142; these read DIG, FPDSD, AQKPKML, and TTEE.

Belongs to the IspF family. Homotrimer. It depends on a divalent metal cation as a cofactor.

The catalysed reaction is 4-CDP-2-C-methyl-D-erythritol 2-phosphate = 2-C-methyl-D-erythritol 2,4-cyclic diphosphate + CMP. It participates in isoprenoid biosynthesis; isopentenyl diphosphate biosynthesis via DXP pathway; isopentenyl diphosphate from 1-deoxy-D-xylulose 5-phosphate: step 4/6. Involved in the biosynthesis of isopentenyl diphosphate (IPP) and dimethylallyl diphosphate (DMAPP), two major building blocks of isoprenoid compounds. Catalyzes the conversion of 4-diphosphocytidyl-2-C-methyl-D-erythritol 2-phosphate (CDP-ME2P) to 2-C-methyl-D-erythritol 2,4-cyclodiphosphate (ME-CPP) with a corresponding release of cytidine 5-monophosphate (CMP). The sequence is that of 2-C-methyl-D-erythritol 2,4-cyclodiphosphate synthase from Clostridium botulinum (strain Okra / Type B1).